The chain runs to 266 residues: Coiled-coil domain-containing glutamate-rich protein 2 (266 aa).

The N-terminal stretch at 1–23 (MPPRGPASELLLLRLLLLGAATA) is a signal peptide. Composition is skewed to basic and acidic residues over residues 90-100 (EAGKMRSSQEV), 154-188 (LWQR…EKGV), 204-213 (GGGERREDLP), and 221-266 (QPEA…RREG). The tract at residues 90 to 266 (EAGKMRSSQE…TLGEQLRREG (177 aa)) is disordered.

Expressed at higher levels in fetal brain and skeletal muscle. Lower expression is detected in fetal kidney, liver, spleen, thymus, heart and lung.

It is found in the secreted. The chain is Coiled-coil domain-containing glutamate-rich protein 2 (CCER2) from Homo sapiens (Human).